Here is a 496-residue protein sequence, read N- to C-terminus: MIDLKQYEFWFLVGSQYLYGLETLKKVEQQASKIVDSLNDDPIFPSKIVLKPVLKSSSEITEIFEKANADPKCAGVIVWMHTFSPSKMWIRGLSINKKPLLHLHTQYNREIPWDTIDMDYMNLNQSAHGDREHGFIHARMRLPRKVVVGHWEEKEVREKIAKWMRVACAIQDGRMGQIVRFGDNMREVASTEGDKVEAQIKLGWSINTWGVGELAERVKAVPEREVEELLTEYREKYIMPEDEYSLKAIREQAKIEIALREFLKEKNAIAFTTTFEDLHDLPQLPGLAVQRLMEEGYGFGAEGDWKAAGLVRAIKVMGTGLPGGTSFMEDYTYHLTPGNELVLGAHMLEVCPTIAKEKPRIEVHPLSIGGKADPARLVFDGQEGPAVNASIVDMGNRFRLVVNKVLSVPIERKMPKLPTARVLWKPMPDFKRATTAWILAGGSHHTAFSTAIDIEYLIDWAEALEIEYVVIDENLDLEDFKKELRWNELYWGLLKR.

Mn(2+)-binding residues include E302, E329, H346, and H445.

The protein belongs to the arabinose isomerase family. Mn(2+) serves as cofactor.

It catalyses the reaction beta-L-arabinopyranose = L-ribulose. Its pathway is carbohydrate degradation; L-arabinose degradation via L-ribulose; D-xylulose 5-phosphate from L-arabinose (bacterial route): step 1/3. Functionally, catalyzes the conversion of L-arabinose to L-ribulose. The sequence is that of L-arabinose isomerase from Thermotoga sp. (strain RQ2).